The sequence spans 154 residues: Transcriptional repressor NrdR (154 aa).

The disordered stretch occupies residues 1-22 (MRCPFCAHDDSQVKDSRPTDDG). A zinc finger spans residues 3 to 34 (CPFCAHDDSQVKDSRPTDDGAAIRRRRQCEGC). A compositionally biased stretch (basic and acidic residues) spans 7 to 22 (AHDDSQVKDSRPTDDG). In terms of domain architecture, ATP-cone spans 49-139 (MTVVKSDGRR…VYKDFREAKD (91 aa)).

Belongs to the NrdR family. Zn(2+) is required as a cofactor.

Functionally, negatively regulates transcription of bacterial ribonucleotide reductase nrd genes and operons by binding to NrdR-boxes. This Rhizorhabdus wittichii (strain DSM 6014 / CCUG 31198 / JCM 15750 / NBRC 105917 / EY 4224 / RW1) (Sphingomonas wittichii) protein is Transcriptional repressor NrdR.